The sequence spans 390 residues: Chorismate synthase 1 (390 aa).

Positions 39 and 45 each coordinate NADP(+). Residues 95-117 (EQEEKEMKRKVTKPRPGHADLNG) are disordered. FMN-binding positions include 132 to 134 (RSS), 253 to 254 (NA), Gly298, 313 to 317 (KPIPT), and Arg339.

Belongs to the chorismate synthase family. As to quaternary structure, homotetramer. FMNH2 is required as a cofactor.

The enzyme catalyses 5-O-(1-carboxyvinyl)-3-phosphoshikimate = chorismate + phosphate. Its pathway is metabolic intermediate biosynthesis; chorismate biosynthesis; chorismate from D-erythrose 4-phosphate and phosphoenolpyruvate: step 7/7. Functionally, catalyzes the anti-1,4-elimination of the C-3 phosphate and the C-6 proR hydrogen from 5-enolpyruvylshikimate-3-phosphate (EPSP) to yield chorismate, which is the branch point compound that serves as the starting substrate for the three terminal pathways of aromatic amino acid biosynthesis. This reaction introduces a second double bond into the aromatic ring system. This Bacillus cereus (strain ATCC 14579 / DSM 31 / CCUG 7414 / JCM 2152 / NBRC 15305 / NCIMB 9373 / NCTC 2599 / NRRL B-3711) protein is Chorismate synthase 1.